The following is a 355-amino-acid chain: Peptide chain release factor 1 (355 aa).

Gln233 is subject to N5-methylglutamine. Positions 280-293 are enriched in basic and acidic residues; sequence KRRQKEQERSDSRR. A disordered region spans residues 280-310; the sequence is KRRQKEQERSDSRRGQVGSGDRSERIRTYNF.

Belongs to the prokaryotic/mitochondrial release factor family. Post-translationally, methylated by PrmC. Methylation increases the termination efficiency of RF1.

Its subcellular location is the cytoplasm. Its function is as follows. Peptide chain release factor 1 directs the termination of translation in response to the peptide chain termination codons UAG and UAA. This Rickettsia prowazekii (strain Madrid E) protein is Peptide chain release factor 1 (prfA).